A 347-amino-acid polypeptide reads, in one-letter code: tRNA N6-adenosine threonylcarbamoyltransferase (347 aa).

2 residues coordinate Fe cation: His-111 and His-115. Residues 134–138, Asp-167, Gly-180, and Asn-276 each bind substrate; that span reads LVSGG. Asp-304 contacts Fe cation.

This sequence belongs to the KAE1 / TsaD family. Requires Fe(2+) as cofactor.

The protein localises to the cytoplasm. It carries out the reaction L-threonylcarbamoyladenylate + adenosine(37) in tRNA = N(6)-L-threonylcarbamoyladenosine(37) in tRNA + AMP + H(+). Required for the formation of a threonylcarbamoyl group on adenosine at position 37 (t(6)A37) in tRNAs that read codons beginning with adenine. Is involved in the transfer of the threonylcarbamoyl moiety of threonylcarbamoyl-AMP (TC-AMP) to the N6 group of A37, together with TsaE and TsaB. TsaD likely plays a direct catalytic role in this reaction. This chain is tRNA N6-adenosine threonylcarbamoyltransferase, found in Nitrosospira multiformis (strain ATCC 25196 / NCIMB 11849 / C 71).